The following is an 838-amino-acid chain: Adenylate cyclase (838 aa).

The interval 1-541 (MNYDLFSAQK…DLRLSFPVTV (541 aa)) is catalytic. The regulatory stretch occupies residues 547 to 838 (EDLTHACEIR…VPFHSRLAMS (292 aa)).

This sequence belongs to the adenylyl cyclase class-1 family.

The protein localises to the cytoplasm. The enzyme catalyses ATP = 3',5'-cyclic AMP + diphosphate. This is Adenylate cyclase (cya) from Pasteurella multocida (strain Pm70).